The following is a 357-amino-acid chain: MSLTRLLIRDFRNIETADLALSPGFNFLVGANGSGKTSVLEAIYTLGHGRAFRSLQIGCVIRHEQEAFVLHGRLQGEERETAIGLTKDKQGDSKVRIDGTDGHKVAELAHLMPMQLITPEGFTLLNGGPKYRRAFLDWGCFHNEPGFFTAWSNLKRLLKQRNAALRQVTRYEQLRPWDKELIPLAEQISTWRAEYSAGIAADMDDTCKQFLPEFSLTFSFQRGWEKETEYAEVLERNFERDRQLTYTAHGPHKADLRIRADGAPVEDTLSRGQLKLLMCALRLAQGEFLTRESGRRCLYLIDDFASELDDERRGLLASRLKATQSQVFVSAISAEHVIDMSDENSKMFTVEKGKITD.

Residue 30–37 participates in ATP binding; the sequence is GANGSGKT.

This sequence belongs to the RecF family.

Its subcellular location is the cytoplasm. The RecF protein is involved in DNA metabolism; it is required for DNA replication and normal SOS inducibility. RecF binds preferentially to single-stranded, linear DNA. It also seems to bind ATP. The polypeptide is DNA replication and repair protein RecF (Shigella flexneri serotype 5b (strain 8401)).